A 119-amino-acid polypeptide reads, in one-letter code: Large ribosomal subunit protein uL22 (119 aa).

The protein belongs to the universal ribosomal protein uL22 family. In terms of assembly, part of the 50S ribosomal subunit.

In terms of biological role, this protein binds specifically to 23S rRNA; its binding is stimulated by other ribosomal proteins, e.g. L4, L17, and L20. It is important during the early stages of 50S assembly. It makes multiple contacts with different domains of the 23S rRNA in the assembled 50S subunit and ribosome. The globular domain of the protein is located near the polypeptide exit tunnel on the outside of the subunit, while an extended beta-hairpin is found that lines the wall of the exit tunnel in the center of the 70S ribosome. In Rickettsia rickettsii (strain Iowa), this protein is Large ribosomal subunit protein uL22.